A 194-amino-acid chain; its full sequence is Peptidyl-tRNA hydrolase (194 aa).

Residue Y17 coordinates tRNA. The active-site Proton acceptor is H22. TRNA contacts are provided by F68, N70, and N116.

It belongs to the PTH family. In terms of assembly, monomer.

The protein localises to the cytoplasm. It catalyses the reaction an N-acyl-L-alpha-aminoacyl-tRNA + H2O = an N-acyl-L-amino acid + a tRNA + H(+). Functionally, hydrolyzes ribosome-free peptidyl-tRNAs (with 1 or more amino acids incorporated), which drop off the ribosome during protein synthesis, or as a result of ribosome stalling. Its function is as follows. Catalyzes the release of premature peptidyl moieties from peptidyl-tRNA molecules trapped in stalled 50S ribosomal subunits, and thus maintains levels of free tRNAs and 50S ribosomes. The polypeptide is Peptidyl-tRNA hydrolase (Haemophilus ducreyi (strain 35000HP / ATCC 700724)).